A 108-amino-acid polypeptide reads, in one-letter code: MKTKLRKNDEVIVIAGSYKGTKGTILKVLPKQQRVQVKGVNVVTKHVKPSQSNSEGSIQNFEAPIHISNVAYVHKSGPKDKSGIASKISYEKRKDKKVRIARKTGKVI.

Belongs to the universal ribosomal protein uL24 family. In terms of assembly, part of the 50S ribosomal subunit.

One of two assembly initiator proteins, it binds directly to the 5'-end of the 23S rRNA, where it nucleates assembly of the 50S subunit. Its function is as follows. One of the proteins that surrounds the polypeptide exit tunnel on the outside of the subunit. The polypeptide is Large ribosomal subunit protein uL24 (Mycoplasmopsis pulmonis (strain UAB CTIP) (Mycoplasma pulmonis)).